A 162-amino-acid chain; its full sequence is MVKLDRAARGLFLAELVRGLSLTFSYMFRPRATINYPYERSPMSPRFRGEHALRRYPNGEERCIACKLCEAVCPALAITIEAEPREDGSRRTTRYDIDMTKCIYCGLCQEACPVDAIVEGPNLEFAAETREELFYNKEKLLANGDRWEALIAANIAADAPYR.

2 consecutive 4Fe-4S ferredoxin-type domains span residues 53–83 (LRRY…IEAE) and 93–122 (TRYD…EGPN). Positions 63, 66, 69, 73, 102, 105, 108, and 112 each coordinate [4Fe-4S] cluster.

Belongs to the complex I 23 kDa subunit family. NDH-1 is composed of 14 different subunits. Subunits NuoA, H, J, K, L, M, N constitute the membrane sector of the complex. Requires [4Fe-4S] cluster as cofactor.

The protein resides in the cell inner membrane. It catalyses the reaction a quinone + NADH + 5 H(+)(in) = a quinol + NAD(+) + 4 H(+)(out). Its function is as follows. NDH-1 shuttles electrons from NADH, via FMN and iron-sulfur (Fe-S) centers, to quinones in the respiratory chain. The immediate electron acceptor for the enzyme in this species is believed to be ubiquinone. Couples the redox reaction to proton translocation (for every two electrons transferred, four hydrogen ions are translocated across the cytoplasmic membrane), and thus conserves the redox energy in a proton gradient. The sequence is that of NADH-quinone oxidoreductase subunit I from Rhodospirillum centenum (strain ATCC 51521 / SW).